The following is a 358-amino-acid chain: 3-isopropylmalate dehydrogenase (358 aa).

An NAD(+)-binding site is contributed by 77 to 90; that stretch reads GPKWTHLPPDQQPE. Arginine 98, arginine 108, arginine 137, and aspartate 226 together coordinate substrate. Mg(2+) is bound by residues aspartate 226, aspartate 250, and aspartate 254. 284-296 lines the NAD(+) pocket; it reads GSAPDIAGKGIAN.

The protein belongs to the isocitrate and isopropylmalate dehydrogenases family. LeuB type 1 subfamily. Homodimer. Mg(2+) serves as cofactor. Mn(2+) is required as a cofactor.

Its subcellular location is the cytoplasm. It catalyses the reaction (2R,3S)-3-isopropylmalate + NAD(+) = 4-methyl-2-oxopentanoate + CO2 + NADH. It participates in amino-acid biosynthesis; L-leucine biosynthesis; L-leucine from 3-methyl-2-oxobutanoate: step 3/4. In terms of biological role, catalyzes the oxidation of 3-carboxy-2-hydroxy-4-methylpentanoate (3-isopropylmalate) to 3-carboxy-4-methyl-2-oxopentanoate. The product decarboxylates to 4-methyl-2 oxopentanoate. This is 3-isopropylmalate dehydrogenase from Mannheimia succiniciproducens (strain KCTC 0769BP / MBEL55E).